The primary structure comprises 948 residues: Zinc finger CCCH domain-containing protein 18 (948 aa).

M1 is modified (N-acetylmethionine). Positions 1-219 (MDVAESPELD…SDRKVRPRPT (219 aa)) are disordered. S6 is modified (phosphoserine). Over residues 15-25 (EDEEQPALSDD) the composition is skewed to acidic residues. Phosphoserine is present on residues S33, S45, S58, S64, S71, S75, S80, and S92. Residues 70–86 (ASEPKSQDQDSEAHELS) are compositionally biased toward basic and acidic residues. Positions 95 to 105 (EEGDDVEEDGT) are enriched in acidic residues. T105 is subject to Phosphothreonine. Phosphoserine occurs at positions 106 and 114. The span at 106-120 (SDLRDEASSVTRELD) shows a compositional bias: basic and acidic residues. 2 stretches are compositionally biased toward acidic residues: residues 121 to 132 (EHELDYDEEVPE) and 139 to 154 (QEEEAEKAGAEEEEEK). A Phosphoserine modification is found at S169. Positions 177–186 (EAAKEKKKED) are enriched in basic and acidic residues. Residues 187–203 (DDGEIDDGEIDDDDLEE) are compositionally biased toward acidic residues. The span at 204–213 (GEVKDPSDRK) shows a compositional bias: basic and acidic residues. A C3H1-type zinc finger spans residues 215 to 241 (RPRPTCRFFMKGNCTWGMSCRFIHPGV). G245 bears the Omega-N-methylarginine mark. Disordered stretches follow at residues 272–296 (ANPWGGPVVDEILPPPPPEPPTESA) and 388–922 (YTEA…TLSR). The segment covering 392 to 480 (EPYHNYRERE…DREKDKEKPK (89 aa)) has biased composition (basic and acidic residues). Residues 395–460 (HNYRERERER…RERAKRDEKD (66 aa)) are a coiled coil. Residue S483 is modified to Phosphoserine. K506 participates in a covalent cross-link: Glycyl lysine isopeptide (Lys-Gly) (interchain with G-Cter in SUMO2). A compositionally biased stretch (basic and acidic residues) spans 506 to 516 (KRADEWKDPWR). Phosphoserine occurs at positions 528, 530, and 532. Residues 541–602 (SASSASASNS…SRSRSFSSSP (62 aa)) are compositionally biased toward low complexity. The segment covering 603-612 (SPSPTPSPHR) has biased composition (pro residues). Residues K618 and K657 each participate in a glycyl lysine isopeptide (Lys-Gly) (interchain with G-Cter in SUMO2) cross-link. Over residues 657 to 666 (KPGDLREARR) the composition is skewed to basic and acidic residues. Low complexity-rich tracts occupy residues 688 to 721 (GSSYSGSSSRSRSLSVSSVSSVSSATSSSSSVHS) and 732 to 746 (ASPVSSASSRSPTPA). A compositionally biased stretch (basic and acidic residues) spans 756-770 (KKEDGVREEKRRRDP). Low complexity predominate over residues 774-804 (PPKSSKAPAGGKASQQAAAPQPAVPGQPQQG). K810 is subject to N6-acetyllysine. K813 participates in a covalent cross-link: Glycyl lysine isopeptide (Lys-Gly) (interchain with G-Cter in SUMO2). Positions 820–837 (AADKGSRKRYEPSDKDRQ) are enriched in basic and acidic residues. Phosphoserine is present on residues S838, S847, S863, S888, and S891. Residues 888–898 (SPQSKGSSKVT) are compositionally biased toward polar residues. The span at 902-919 (GKATDTATAGTKSGKAST) shows a compositional bias: low complexity. Residue K903 forms a Glycyl lysine isopeptide (Lys-Gly) (interchain with G-Cter in SUMO2) linkage. A coiled-coil region spans residues 916–945 (KASTLSRREELLKQLKAVEDAIARKRAKIP).

Interacts with ZFC3H1 in a RNase-insensitive manner.

It is found in the nucleus. In Mus musculus (Mouse), this protein is Zinc finger CCCH domain-containing protein 18 (Zc3h18).